We begin with the raw amino-acid sequence, 125 residues long: Holo-[acyl-carrier-protein] synthase (125 aa).

Mg(2+)-binding residues include Asp8 and Glu57.

Belongs to the P-Pant transferase superfamily. AcpS family. It depends on Mg(2+) as a cofactor.

It localises to the cytoplasm. The enzyme catalyses apo-[ACP] + CoA = holo-[ACP] + adenosine 3',5'-bisphosphate + H(+). In terms of biological role, transfers the 4'-phosphopantetheine moiety from coenzyme A to a Ser of acyl-carrier-protein. The polypeptide is Holo-[acyl-carrier-protein] synthase (Neisseria gonorrhoeae (strain ATCC 700825 / FA 1090)).